The primary structure comprises 81 residues: Large ribosomal subunit protein bL31B (81 aa).

Belongs to the bacterial ribosomal protein bL31 family. Type B subfamily. Part of the 50S ribosomal subunit.

In Bacillus cereus (strain G9842), this protein is Large ribosomal subunit protein bL31B.